The sequence spans 761 residues: 3'-5' RNA nuclease TATDN2 (761 aa).

Disordered stretches follow at residues 1–90 (MASE…HFLG), 135–181 (CSLK…LRDQ), 197–294 (KSMP…RRTV), 318–337 (KDREVVMEHPSSGSDWSDVE), 343–364 (RFSQEEPVSLKPSAVPEPSSFT), and 388–486 (SSPK…PKSH). Low complexity-rich tracts occupy residues 33 to 52 (APSSRPAQRSASRSGGPSSP) and 66 to 85 (SRRLSWGSSRRRNNSSSSFS). The segment covering 247-294 (QKEKDATPEVSMEEDKTVPERSSFYDRRVVIDPQEKPSEEPLGDRRTV) has biased composition (basic and acidic residues). Positions 388-402 (SSPKPSSYPSTGSSS) are enriched in low complexity. Polar residues predominate over residues 417-431 (SDYSPNSTGSVQNTS). The segment covering 452-470 (RSSEEREVKEKRTFQEEMP) has biased composition (basic and acidic residues). 6 residues coordinate a divalent metal cation: histidine 499, histidine 501, glutamate 593, histidine 630, histidine 655, and aspartate 707.

Belongs to the metallo-dependent hydrolases superfamily. TatD-type hydrolase family. Mg(2+) serves as cofactor.

Its subcellular location is the nucleus. Its function is as follows. Mg(2+)-dependent 3'RNA exonuclease and endonuclease that resolves R-loops via specific degradation of R-loop RNA stucture. Shows no activity against D-loop and minimal activity against the RNA strand of an RNA-DNA hybrid duplex oligomer. Has no 3' or 5' exonuclease activity, no uracil glycosylase activity, and no 5' flap endonuclease activity on DNA substrates. May have a role in maintaining genomic stability through its role in R-loop resolution. The sequence is that of 3'-5' RNA nuclease TATDN2 (TATDN2) from Homo sapiens (Human).